A 446-amino-acid chain; its full sequence is UPF0597 protein DvMF_1488 (446 aa).

This sequence belongs to the UPF0597 family.

The sequence is that of UPF0597 protein DvMF_1488 from Nitratidesulfovibrio vulgaris (strain DSM 19637 / Miyazaki F) (Desulfovibrio vulgaris).